Consider the following 108-residue polypeptide: uncharacterized protein (108 aa).

Helical transmembrane passes span 24–44, 55–75, and 88–108; these read LWIT…GGLL, AHMA…YLAM, and RFEI…SIGI.

The protein to cation A.eutrophus efflux system protein CzcD.

Its subcellular location is the cell membrane. This is an uncharacterized protein from Geobacillus stearothermophilus (Bacillus stearothermophilus).